The following is a 555-amino-acid chain: Energy-dependent translational throttle protein EttA (555 aa).

2 consecutive ABC transporter domains span residues 6–259 (YTMH…AQEA) and 324–550 (LEVS…RIKY). ATP is bound at residue 39–46 (GLNGAGKS). The interval 95 to 139 (SEVVNALKRLDEVYALYADPDADFDKLAAEQGRLEEIIQAHDGHN) is arm. The tract at residues 242-322 (GNYSSWLEQK…IPPGPRLGDK (81 aa)) is ptIM. ATP is bound at residue 356 to 363 (GPNGAGKS).

The protein belongs to the ABC transporter superfamily. ABCF family. Translational throttle EttA subfamily. Monomer. Probably contacts ribosomal proteins L1, L5, L33 and S7, the 16S and 23S rRNA and the P-site containing tRNA(fMet).

The protein resides in the cytoplasm. It carries out the reaction ATP + H2O = ADP + phosphate + H(+). A translation factor that gates the progression of the 70S ribosomal initiation complex (IC, containing tRNA(fMet) in the P-site) into the translation elongation cycle by using a mechanism sensitive to the ATP/ADP ratio. Binds to the 70S ribosome E-site where it modulates the state of the translating ribosome during subunit translocation. ATP hydrolysis probably frees it from the ribosome, which can enter the elongation phase. The chain is Energy-dependent translational throttle protein EttA from Escherichia coli O6:H1 (strain CFT073 / ATCC 700928 / UPEC).